A 291-amino-acid chain; its full sequence is Farnesyl diphosphate synthase (291 aa).

Isopentenyl diphosphate-binding residues include Lys-44, Arg-47, and His-76. Asp-83 and Asp-89 together coordinate Mg(2+). Position 94 (Arg-94) interacts with (2E)-geranyl diphosphate. Residue Arg-95 participates in isopentenyl diphosphate binding. (2E)-geranyl diphosphate contacts are provided by Lys-177, Thr-178, Gln-215, and Lys-232.

The protein belongs to the FPP/GGPP synthase family. Requires Mg(2+) as cofactor.

It is found in the cytoplasm. The catalysed reaction is isopentenyl diphosphate + (2E)-geranyl diphosphate = (2E,6E)-farnesyl diphosphate + diphosphate. This Micrococcus luteus (Micrococcus lysodeikticus) protein is Farnesyl diphosphate synthase (fps).